Consider the following 501-residue polypeptide: Sucrose-6-phosphate hydrolase (501 aa).

Substrate is bound by residues Leu44–Asp47, Gln63, Tyr106–Thr107, Arg167–Asp168, and Glu222. Asp47 is a catalytic residue.

Belongs to the glycosyl hydrolase 32 family.

It carries out the reaction Hydrolysis of terminal non-reducing beta-D-fructofuranoside residues in beta-D-fructofuranosides.. Its pathway is glycan biosynthesis; sucrose metabolism. In Pediococcus pentosaceus, this protein is Sucrose-6-phosphate hydrolase (scrB).